The chain runs to 601 residues: Zinc finger protein 37 (601 aa).

The 70-residue stretch at 1–70 folds into the KRAB domain; it reads MATPEPAESD…VRANKNSSSS (70 aa). Residue Thr-3 is modified to Phosphothreonine. The residue at position 9 (Ser-9) is a Phosphoserine. Over residues 30–43 the composition is skewed to polar residues; that stretch reads ETCSNPASMGNQDP. Positions 30-254 are disordered; it reads ETCSNPASMG…SKSDKAPGSG (225 aa). Residues 60-70 show a composition bias toward low complexity; the sequence is SVRANKNSSSS. The span at 77–88 shows a compositional bias: polar residues; the sequence is TGTSAKVQQDGA. 3 stretches are compositionally biased toward basic and acidic residues: residues 115-136, 164-174, and 183-238; these read KSSE…PSEK, KKPDTANEYRK, and VNRD…EKRK. The C2H2-type 1 zinc-finger motif lies at 257 to 279; sequence YECNQCGKVLSHKQGLLDHQRTH. The C2H2-type 2; atypical zinc finger occupies 285 to 303; sequence YECYECGIAFSQKSHLVVH. 10 C2H2-type zinc fingers span residues 314-337, 343-365, 371-393, 399-421, 427-449, 455-477, 483-505, 511-533, 539-561, and 570-592; these read YECV…RISH, YKCN…IRSH, YECK…VRTH, YECN…MRIH, FECT…QRTH, YKCK…MRTH, FECN…QRVH, YECV…QRTH, FECY…QRSH, and YECV…MKTH.

The protein belongs to the krueppel C2H2-type zinc-finger protein family. As to expression, expressed in testes, brain, kidney, spleen, thymus, lung, and at low levels in liver.

It is found in the nucleus. May be involved in transcriptional regulation. The chain is Zinc finger protein 37 (Zfp37) from Rattus norvegicus (Rat).